The primary structure comprises 312 residues: Ornithine carbamoyltransferase (312 aa).

Carbamoyl phosphate-binding positions include 59-62, Q86, R110, and 137-140; these read STRT and HPCQ. L-ornithine is bound by residues N167, D231, and 235–236; that span reads SM. Positions 271 and 299 each coordinate carbamoyl phosphate.

This sequence belongs to the aspartate/ornithine carbamoyltransferase superfamily. OTCase family.

The protein localises to the cytoplasm. The catalysed reaction is carbamoyl phosphate + L-ornithine = L-citrulline + phosphate + H(+). It participates in amino-acid biosynthesis; L-arginine biosynthesis; L-arginine from L-ornithine and carbamoyl phosphate: step 1/3. Its function is as follows. Reversibly catalyzes the transfer of the carbamoyl group from carbamoyl phosphate (CP) to the N(epsilon) atom of ornithine (ORN) to produce L-citrulline. The protein is Ornithine carbamoyltransferase of Methanopyrus kandleri (strain AV19 / DSM 6324 / JCM 9639 / NBRC 100938).